Consider the following 170-residue polypeptide: Peptide deformylase 2 (170 aa).

Residues cysteine 94 and histidine 136 each coordinate Fe cation. Residue glutamate 137 is part of the active site. Histidine 140 lines the Fe cation pocket.

It belongs to the polypeptide deformylase family. Requires Fe(2+) as cofactor.

It carries out the reaction N-terminal N-formyl-L-methionyl-[peptide] + H2O = N-terminal L-methionyl-[peptide] + formate. Its function is as follows. Removes the formyl group from the N-terminal Met of newly synthesized proteins. Requires at least a dipeptide for an efficient rate of reaction. N-terminal L-methionine is a prerequisite for activity but the enzyme has broad specificity at other positions. The protein is Peptide deformylase 2 of Xanthomonas campestris pv. campestris (strain ATCC 33913 / DSM 3586 / NCPPB 528 / LMG 568 / P 25).